We begin with the raw amino-acid sequence, 375 residues long: Membrane progesterone receptor epsilon (375 aa).

Residues 1-39 (MPRRLQQRGAGVKGPPASTSRRSHPASASAPRSPPAATT) are disordered. Residues 1–84 (MPRRLQQRGA…VLKPTNETLN (84 aa)) are Cytoplasmic-facing. The span at 15 to 39 (PPASTSRRSHPASASAPRSPPAATT) shows a compositional bias: low complexity. Residues 85–105 (FWTHFIPLLLFLSKFCRLFFL) form a helical membrane-spanning segment. Topologically, residues 106–114 (GGSDVPFHH) are extracellular. Residues 115 to 135 (PWLLPLWCYASGVLLTFAMSC) form a helical membrane-spanning segment. Residues 136-160 (TAHVFSCLSLRLRAAFFYLDYASIS) are Cytoplasmic-facing. The chain crosses the membrane as a helical span at residues 161–181 (YYGFGSTVAYYYYLLPSLSLL). At 182 to 203 (DARVMTPYVQQRLGWHVDCTRL) the chain is on the extracellular side. The helical transmembrane segment at 204–224 (IAVYRALVLPVAFVLAVACTV) threads the bilayer. The Cytoplasmic segment spans residues 225 to 241 (ACCKSRTDWCSYPFALR). A helical transmembrane segment spans residues 242-262 (TFVFVMPLSMACPIMLESWLF). The Extracellular portion of the chain corresponds to 263–299 (DLRGENPTLFVHFYRRYFWLVVAAFFNVSKIPERIQP). The helical transmembrane segment at 300 to 320 (GLFDIIGHSHQLFHIFTFLSI) threads the bilayer. The Cytoplasmic portion of the chain corresponds to 321 to 341 (YDQVYYVEEGLRQFLQAPPAA). The chain crosses the membrane as a helical span at residues 342–362 (PTFSGTVGYMLLLVVCLGLVI). Residues 363 to 375 (RKFLNSTEFCSKK) are Extracellular-facing.

The protein belongs to the ADIPOR family. Homodimer.

It is found in the cell membrane. Plasma membrane progesterone (P4) receptor coupled to G proteins. Seems to act through a G(s) mediated pathway. May be involved in regulating rapid P4 signaling in the nervous system. Also binds dehydroepiandrosterone (DHEA), pregnanolone, pregnenolone and allopregnanolone. This Mus musculus (Mouse) protein is Membrane progesterone receptor epsilon.